The chain runs to 561 residues: Lanosterol 14-alpha demethylase (561 aa).

Cysteine 501 provides a ligand contact to heme.

Belongs to the cytochrome P450 family. The cofactor is heme.

It localises to the membrane. It carries out the reaction a 14alpha-methyl steroid + 3 reduced [NADPH--hemoprotein reductase] + 3 O2 = a Delta(14) steroid + formate + 3 oxidized [NADPH--hemoprotein reductase] + 4 H2O + 4 H(+). It catalyses the reaction a 14alpha-methyl steroid + reduced [NADPH--hemoprotein reductase] + O2 = a 14alpha-hydroxymethyl steroid + oxidized [NADPH--hemoprotein reductase] + H2O + H(+). The enzyme catalyses a 14alpha-hydroxymethyl steroid + reduced [NADPH--hemoprotein reductase] + O2 = a 14alpha-formyl steroid + oxidized [NADPH--hemoprotein reductase] + 2 H2O + H(+). The catalysed reaction is a 14alpha-formyl steroid + reduced [NADPH--hemoprotein reductase] + O2 = a Delta(14) steroid + formate + oxidized [NADPH--hemoprotein reductase] + H2O + 2 H(+). It carries out the reaction lanosterol + 3 reduced [NADPH--hemoprotein reductase] + 3 O2 = 4,4-dimethyl-5alpha-cholesta-8,14,24-trien-3beta-ol + formate + 3 oxidized [NADPH--hemoprotein reductase] + 4 H2O + 4 H(+). It catalyses the reaction lanosterol + reduced [NADPH--hemoprotein reductase] + O2 = 32-hydroxylanosterol + oxidized [NADPH--hemoprotein reductase] + H2O + H(+). The enzyme catalyses 32-hydroxylanosterol + reduced [NADPH--hemoprotein reductase] + O2 = 32-oxolanosterol + oxidized [NADPH--hemoprotein reductase] + 2 H2O + H(+). The catalysed reaction is 32-oxolanosterol + reduced [NADPH--hemoprotein reductase] + O2 = 4,4-dimethyl-5alpha-cholesta-8,14,24-trien-3beta-ol + formate + oxidized [NADPH--hemoprotein reductase] + H2O + 2 H(+). It carries out the reaction eburicol + 3 reduced [NADPH--hemoprotein reductase] + 3 O2 = 14-demethyleburicol + formate + 3 oxidized [NADPH--hemoprotein reductase] + 4 H2O + 4 H(+). It catalyses the reaction eburicol + reduced [NADPH--hemoprotein reductase] + O2 = 32-hydroxyeburicol + oxidized [NADPH--hemoprotein reductase] + H2O + H(+). The enzyme catalyses 32-hydroxyeburicol + reduced [NADPH--hemoprotein reductase] + O2 = 32-oxoeburicol + oxidized [NADPH--hemoprotein reductase] + 2 H2O + H(+). The catalysed reaction is 32-oxoeburicol + reduced [NADPH--hemoprotein reductase] + O2 = 14-demethyleburicol + formate + oxidized [NADPH--hemoprotein reductase] + H2O + 2 H(+). The protein operates within steroid biosynthesis; zymosterol biosynthesis; zymosterol from lanosterol: step 1/6. Functionally, sterol 14alpha-demethylase that plays a critical role in the third module of ergosterol biosynthesis pathway, being ergosterol the major sterol component in fungal membranes that participates in a variety of functions. The third module or late pathway involves the ergosterol synthesis itself through consecutive reactions that mainly occur in the endoplasmic reticulum (ER) membrane. In filamentous fungi, during the initial step of this module, lanosterol (lanosta-8,24-dien-3beta-ol) can be metabolized to eburicol. Sterol 14alpha-demethylase catalyzes the three-step oxidative removal of the 14alpha-methyl group (C-32) of both these sterols in the form of formate, and converts eburicol and lanosterol to 14-demethyleburicol (4,4,24-trimethylergosta-8,14,24(28)-trienol) and 4,4-dimethyl-5alpha-cholesta-8,14,24-trien-3beta-ol, respectively, which are further metabolized by other enzymes in the pathway to ergosterol. Can also use substrates not intrinsic to fungi, such as 24,25-dihydrolanosterol (DHL), producing 4,4-dimethyl-8,14-cholestadien-3-beta-ol, but at lower rates than the endogenous substrates. The protein is Lanosterol 14-alpha demethylase (ERG11) of Mycosarcoma maydis (Corn smut fungus).